Here is a 322-residue protein sequence, read N- to C-terminus: Ras association domain-containing protein 4 (322 aa).

The segment at 96–161 (EASPQDSKVP…SKSRAPSEAQ (66 aa)) is disordered. A Phosphoserine modification is found at serine 142. Residues 175–264 (YNHKTSVFTP…KIFLMEADLS (90 aa)) enclose the Ras-associating domain. One can recognise an SARAH domain in the interval 271–318 (VAQYIKFEMPVLDSFVEKLKEEEEREIIKLTMKFQALRLTMLQRLEQL).

As to quaternary structure, interacts directly with activated KRAS in a GTP-dependent manner.

Its function is as follows. Potential tumor suppressor. May act as a KRAS effector protein. May promote apoptosis and cell cycle arrest. The chain is Ras association domain-containing protein 4 (Rassf4) from Mus musculus (Mouse).